The following is an 819-amino-acid chain: Regulator of G-protein signaling rgs-7 (819 aa).

Acidic residues predominate over residues 1–11 (MSDEDADEYDD). 3 disordered regions span residues 1 to 51 (MSDE…EMLW), 112 to 135 (GDDS…GYGS), and 149 to 259 (SSTY…HNNE). Residues 32–44 (YQDTTESTGPSEA) show a composition bias toward polar residues. Residues 112–124 (GDDSSFRSRDRFV) show a composition bias toward basic and acidic residues. Positions 149–166 (SSTYSSSSEAHRLSSLRA) are enriched in low complexity. Residues 173–185 (QLTSTTTSFQPLS) show a composition bias toward polar residues. Over residues 213–223 (RMYRKNPKYRR) the composition is skewed to basic residues. The segment covering 234–259 (SRLEESTSQESERAVTPESWMEHNNE) has biased composition (basic and acidic residues). In terms of domain architecture, C2 spans 290–429 (KHKDIRGIIF…KASQVVGDPF (140 aa)). Disordered stretches follow at residues 515-594 (YRST…DDNG) and 617-640 (FTFS…EEDK). 3 stretches are compositionally biased toward polar residues: residues 517–533 (STGS…NLLD), 559–568 (PSITTTTSEN), and 617–632 (FTFS…NLRQ). An RGS domain is found at 682 to 800 (SFESLLNNKF…LRDRLFLDLL (119 aa)).

Interacts with egl-30.

Functionally, inhibits signal transduction by increasing the GTPase activity of G protein alpha subunit egl-30 (G-alpha(q)), thereby driving it into its inactive GDP-bound form. May organize egl-30 into a stable multiprotein signaling complex, and thereby persistently inhibit egl-30 when triggered by calcium or phospholipids. The chain is Regulator of G-protein signaling rgs-7 (rgs-7) from Caenorhabditis elegans.